Consider the following 173-residue polypeptide: Disulfide bond formation protein B (173 aa).

The Cytoplasmic segment spans residues 1–11 (MNALQWSFRAQ). A helical transmembrane segment spans residues 12–28 (CLTGFLFCTGLLAYAIF). Over 29 to 46 (LQLHQGLEPCPLCIFQRI) the chain is Periplasmic. C38 and C41 form a disulfide bridge. The helical transmembrane segment at 47-63 (AFAVLGILFLIAGLYNS) threads the bilayer. At 64 to 70 (SNVYTRK) the chain is on the cytoplasmic side. Residues 71–88 (AYGLLIFLTAAIGTGIAG) traverse the membrane as a helical segment. Over 89 to 145 (RHVWVQLMPHNTISSCGSPLSFLSETMGPFEVFRTVLTGTSDCGNIDWRFLGLSMPM) the chain is Periplasmic. C104 and C131 are disulfide-bonded. A helical membrane pass occupies residues 146–164 (WSMFWFVALALLGLLVGFK). Residues 165 to 173 (AERRKPLFS) lie on the Cytoplasmic side of the membrane.

The protein belongs to the DsbB family.

It is found in the cell inner membrane. In terms of biological role, required for disulfide bond formation in some periplasmic proteins. Acts by oxidizing the DsbA protein. This is Disulfide bond formation protein B from Xylella fastidiosa (strain 9a5c).